We begin with the raw amino-acid sequence, 421 residues long: Acyl-coenzyme A thioesterase 1 (421 aa).

Residues S232, D326, and H360 each act as charge relay system in the active site.

It belongs to the C/M/P thioester hydrolase family. In terms of assembly, monomer.

The protein resides in the cytoplasm. It is found in the cytosol. It carries out the reaction hexadecanoyl-CoA + H2O = hexadecanoate + CoA + H(+). It catalyses the reaction decanoyl-CoA + H2O = decanoate + CoA + H(+). The catalysed reaction is dodecanoyl-CoA + H2O = dodecanoate + CoA + H(+). The enzyme catalyses tetradecanoyl-CoA + H2O = tetradecanoate + CoA + H(+). It carries out the reaction octadecanoyl-CoA + H2O = octadecanoate + CoA + H(+). It catalyses the reaction eicosanoyl-CoA + H2O = eicosanoate + CoA + H(+). The catalysed reaction is (9Z)-octadecenoyl-CoA + H2O = (9Z)-octadecenoate + CoA + H(+). The enzyme catalyses (9Z)-hexadecenoyl-CoA + H2O = (9Z)-hexadecenoate + CoA + H(+). It carries out the reaction (9E)-octadecenoyl-CoA + H2O = (9E)-octadecenoate + CoA + H(+). It functions in the pathway lipid metabolism; fatty acid metabolism. Functionally, catalyzes the hydrolysis of acyl-CoAs into free fatty acids and coenzyme A (CoASH), regulating their respective intracellular levels. More active towards saturated and unsaturated long chain fatty acyl-CoAs (C12-C20). The chain is Acyl-coenzyme A thioesterase 1 (ACOT1) from Homo sapiens (Human).